A 205-amino-acid polypeptide reads, in one-letter code: Quinone-oxidoreductase QR2 (205 aa).

One can recognise a Flavodoxin-like domain in the interval 5–192 (VYIVYYSTYG…LKQAFHQGMY (188 aa)). Residues 11–15 (STYGH), 112–165 (IFFS…SPYG), and histidine 136 contribute to the FMN site. Position 13 (tyrosine 13) interacts with NAD(+).

Belongs to the WrbA family. FMN is required as a cofactor.

It catalyses the reaction a quinone + NADH + H(+) = a quinol + NAD(+). The catalysed reaction is a quinone + NADPH + H(+) = a quinol + NADP(+). Its activity is regulated as follows. Inhibited by dicumarol. Functionally, NAD(P)H:quinone oxidoreductase reducing quinones by a two-electron transfer mechanism. Can use either NADPH or NADH as electron donor. Can use menadione, 5-hydroxy-1,4-naphthoquinone (juglone) and 2,6-dimethoxy-p-benzoquinone (DMBQ) as substrates. Mitigates the toxicity of exogenous quinones in the rhizosphere. The sequence is that of Quinone-oxidoreductase QR2 from Triphysaria versicolor (Yellow owl's clover).